The following is a 671-amino-acid chain: Leucine aminopeptidase 2 (671 aa).

Substrate is bound by residues 184–186 (QLE) and 311–316 (PYGGME). A Zn(2+)-binding site is contributed by histidine 340. Glutamate 341 serves as the catalytic Proton acceptor. Residues histidine 344 and glutamate 363 each contribute to the Zn(2+) site. Residue tyrosine 429 is the Proton donor of the active site.

The protein belongs to the peptidase M1 family. Zn(2+) is required as a cofactor.

Its subcellular location is the cytoplasm. It localises to the nucleus. The enzyme catalyses an epoxide + H2O = an ethanediol. With respect to regulation, inhibited by 3-(4-benzyloxyphenyl)-2-(R)-amino-1-propanethiol (thioamine) and N-hydroxy-N-(2-(S)-amino-3-(4-benzyloxyphenyl)propyl)-5-carboxypen-tanamide (hydroxamic acid). The aminopeptidase activity is stimulated by LTA(4). Aminopeptidase that preferentially cleaves di- and tripeptides. Also has low epoxide hydrolase activity (in vitro). Can hydrolyze the epoxide leukotriene LTA(4) but it forms preferentially 5,6-dihydroxy-7,9,11,14-eicosatetraenoic acid rather than the cytokine leukotriene B(4) as the product compared to the homologous mammalian enzyme (in vitro). The polypeptide is Leucine aminopeptidase 2 (Saccharomyces cerevisiae (strain YJM789) (Baker's yeast)).